A 446-amino-acid chain; its full sequence is MSGSRSALSVVRLAACAKPCTLGSTSSVLTRPFSHSAQLCSPAKPSIKAIGELRKLVPGTSMLKAKEALLASRPASSPDTDSIALALEWLEADRKKSGAKKADKVASRTAREGVVAVSILSDGLPSSIEMQGELKDEAKRAGIGATSAAAGAIVEINCETDFVAKNEVFAQLVKDVVHTVALFPGLSAQSGAKRGLVEVPVDQLLAFPLLPSSREATGTSVSAKTVGSAIIDVVSRLGEKISIARAAAIVAPSVPSPDATRRSESGTARGGSIVELASAFAHGGSAGFAAAKDVSNPGYVLTSGKVASLVMTRFASDKLPDALQAGSIQSNIRALTRSLARQVAGLETNCIDSAATCPVDGQVSSALYKQPFMMLLPAAAPSLESNAQPVRQVLSTWASHNNLDSNGNNVVEVVDMHRWELGETIAPPDDAGPGFADEVRKAAGLA.

The transit peptide at 1–33 (MSGSRSALSVVRLAACAKPCTLGSTSSVLTRPF) directs the protein to the mitochondrion.

This sequence belongs to the EF-Ts family.

Its subcellular location is the mitochondrion. Its function is as follows. Associates with the EF-Tu.GDP complex and induces the exchange of GDP to GTP. It remains bound to the aminoacyl-tRNA.EF-Tu.GTP complex up to the GTP hydrolysis stage on the ribosome. The protein is Elongation factor Ts, mitochondrial of Mycosarcoma maydis (Corn smut fungus).